A 160-amino-acid polypeptide reads, in one-letter code: Transcription elongation factor GreA (160 aa).

Residues Met1–Arg72 are a coiled coil.

The protein belongs to the GreA/GreB family.

Functionally, necessary for efficient RNA polymerase transcription elongation past template-encoded arresting sites. The arresting sites in DNA have the property of trapping a certain fraction of elongating RNA polymerases that pass through, resulting in locked ternary complexes. Cleavage of the nascent transcript by cleavage factors such as GreA or GreB allows the resumption of elongation from the new 3'terminus. GreA releases sequences of 2 to 3 nucleotides. This is Transcription elongation factor GreA from Streptococcus pneumoniae (strain Hungary19A-6).